A 199-amino-acid polypeptide reads, in one-letter code: Phycocyanobilin lyase CpcT (199 aa).

Belongs to the CpcT/CpeT biliprotein lyase family.

Catalyzes the site-selective attachment of phycocyanobilin (PCB) to 'Cys-154' of C-phycocyanin subunit beta (CpcB) and to 'Cys-153' of phycoerythrocyanin subunit beta (PecB). Does not have chromophore lyase activity for ApcA1, ApcA2, ApcB, ApcD, ApcF or PecA. In Nostoc sp. (strain PCC 7120 / SAG 25.82 / UTEX 2576), this protein is Phycocyanobilin lyase CpcT (cpcT1).